The primary structure comprises 312 residues: tRNA dimethylallyltransferase (312 aa).

Residue 15-22 (GPTAAGKS) participates in ATP binding. Residue 17–22 (TAAGKS) participates in substrate binding. The segment at 40–43 (DSMQ) is interaction with substrate tRNA.

Belongs to the IPP transferase family. As to quaternary structure, monomer. It depends on Mg(2+) as a cofactor.

The enzyme catalyses adenosine(37) in tRNA + dimethylallyl diphosphate = N(6)-dimethylallyladenosine(37) in tRNA + diphosphate. In terms of biological role, catalyzes the transfer of a dimethylallyl group onto the adenine at position 37 in tRNAs that read codons beginning with uridine, leading to the formation of N6-(dimethylallyl)adenosine (i(6)A). This Streptomyces coelicolor (strain ATCC BAA-471 / A3(2) / M145) protein is tRNA dimethylallyltransferase.